The sequence spans 245 residues: Carboxy-S-adenosyl-L-methionine synthase (245 aa).

Residues Tyr42, 67–69 (GCS), 92–93 (DN), 120–121 (DI), Asn135, and Arg202 contribute to the S-adenosyl-L-methionine site.

Belongs to the class I-like SAM-binding methyltransferase superfamily. Cx-SAM synthase family. In terms of assembly, homodimer.

It carries out the reaction prephenate + S-adenosyl-L-methionine = carboxy-S-adenosyl-L-methionine + 3-phenylpyruvate + H2O. Functionally, catalyzes the conversion of S-adenosyl-L-methionine (SAM) to carboxy-S-adenosyl-L-methionine (Cx-SAM). This Vibrio campbellii (strain ATCC BAA-1116) protein is Carboxy-S-adenosyl-L-methionine synthase.